Consider the following 726-residue polypeptide: Pyrroloquinoline quinone-dependent pyranose dehydrogenase (726 aa).

The first 18 residues, 1 to 18 (MRSSSLAWALGLVALANA), serve as a signal peptide directing secretion. Heme b is bound by residues Met83 and Tyr108. An intrachain disulfide couples Cys138 to Cys141. Residue Asn140 is glycosylated (N-linked (GlcNAc...) asparagine). Residues Arg181 and His182 each coordinate heme b. The interval 211–242 (PPLSGGAPTQPPTQQPPTTTAPPPPPPSSTFV) is disordered. Pro residues predominate over residues 219 to 238 (TQPPTQQPPTTTAPPPPPPS). Cys244 and Cys302 form a disulfide bridge. 4 residues coordinate pyrroloquinoline quinone: Arg273, His363, Arg430, and Asn431. 2 residues coordinate Ca(2+): Ser449 and Asp451. Residues Cys492 and Cys525 are joined by a disulfide bond. His539 is a binding site for pyrroloquinoline quinone. Asn551 is a glycosylation site (N-linked (GlcNAc...) asparagine). Pyrroloquinoline quinone-binding residues include His560, Trp563, and Asn564. An intrachain disulfide couples Cys611 to Cys619. Position 621 (Arg621) interacts with pyrroloquinoline quinone. A compositionally biased stretch (pro residues) spans 659 to 678 (ITQPPITTSPPTPTTPPVVQ). Positions 659 to 689 (ITQPPITTSPPTPTTPPVVQPPTTVAPPQAS) are disordered. Positions 679-689 (PPTTVAPPQAS) are enriched in low complexity. The 37-residue stretch at 688-724 (ASQTLWGQCGGQGWTGPTLCPANSVCRESNQWYSQCV) folds into the CBM1 domain.

It belongs to the sugar dehydrogenase AA12 family. It depends on Ca(2+) as a cofactor. The cofactor is pyrroloquinoline quinone. Heme b serves as cofactor.

It localises to the secreted. Its function is as follows. Pyrroloquinoline quinone (PPQ)-dependent oxidoreductase that catalyzes the oxidation of various sugars including L-galactose, L-gulose, D-talose, D-arabinose, D-lyxose, L-fucose and D-glucosone. Shows significant activity toward the reverse-chair conformation of pyranoses. Shows little or no activity toward abundant sugars such as D-glucose, D-fructose, cellobiose, as well L-xylose and L-glucose. This enzyme is able to direct electrical communication with electrodes, without artificial electron mediators, thus allowing direct electron transfer (DET)-type bioelectrocatalysis. Exhibits binding affinity for insoluble cellulose. PDH does not oxidize cello-oligosaccharides but is able to activate the C-1-oxidizing Neurospora crassa LPMO9F and the C-4-oxidizing Neurospora crassa LPMO9C thanks to the electron-tranfer activity of the cytochrome domain and the localization of PDH in the vicinity of the LPMO substrates by the CBM1 domain. The chain is Pyrroloquinoline quinone-dependent pyranose dehydrogenase from Coprinopsis cinerea (strain Okayama-7 / 130 / ATCC MYA-4618 / FGSC 9003) (Inky cap fungus).